The sequence spans 185 residues: dTDP-4-dehydrorhamnose 3,5-epimerase (185 aa).

Substrate contacts are provided by residues arginine 23, glutamate 28, 47–49, and arginine 59; that span reads QDN. The active-site Proton acceptor is histidine 62. The substrate site is built by lysine 72 and histidine 119. Catalysis depends on tyrosine 132, which acts as the Proton donor. Substrate-binding residues include aspartate 143 and lysine 168.

The protein belongs to the dTDP-4-dehydrorhamnose 3,5-epimerase family. Homodimer.

The enzyme catalyses dTDP-4-dehydro-6-deoxy-alpha-D-glucose = dTDP-4-dehydro-beta-L-rhamnose. Its pathway is carbohydrate biosynthesis; dTDP-L-rhamnose biosynthesis. The protein operates within bacterial outer membrane biogenesis; LPS O-antigen biosynthesis. Catalyzes the epimerization of the C3' and C5'positions of dTDP-6-deoxy-D-xylo-4-hexulose, forming dTDP-6-deoxy-L-lyxo-4-hexulose. This chain is dTDP-4-dehydrorhamnose 3,5-epimerase (rfbC), found in Escherichia coli (strain K12).